The sequence spans 225 residues: Cyanamide hydratase DDI2 (225 aa).

Residues 52–162 (VLNHSLRVFQ…LQIATTLDNV (111 aa)) form the HD domain.

The protein belongs to the cyanamide dehydrase family. Homohexamer. Requires Zn(2+) as cofactor.

The catalysed reaction is urea = cyanamide + H2O. In terms of biological role, cyanamide hydratase involved in the detoxification and/or utilization of cyanamide, a toxic nitrile compound distributed widely in the environment. This Saccharomyces cerevisiae (strain ATCC 204508 / S288c) (Baker's yeast) protein is Cyanamide hydratase DDI2.